The chain runs to 569 residues: Proline--tRNA ligase (569 aa).

It belongs to the class-II aminoacyl-tRNA synthetase family. ProS type 1 subfamily. Homodimer.

The protein resides in the cytoplasm. The enzyme catalyses tRNA(Pro) + L-proline + ATP = L-prolyl-tRNA(Pro) + AMP + diphosphate. Its function is as follows. Catalyzes the attachment of proline to tRNA(Pro) in a two-step reaction: proline is first activated by ATP to form Pro-AMP and then transferred to the acceptor end of tRNA(Pro). As ProRS can inadvertently accommodate and process non-cognate amino acids such as alanine and cysteine, to avoid such errors it has two additional distinct editing activities against alanine. One activity is designated as 'pretransfer' editing and involves the tRNA(Pro)-independent hydrolysis of activated Ala-AMP. The other activity is designated 'posttransfer' editing and involves deacylation of mischarged Ala-tRNA(Pro). The misacylated Cys-tRNA(Pro) is not edited by ProRS. This Legionella pneumophila (strain Lens) protein is Proline--tRNA ligase.